A 228-amino-acid chain; its full sequence is Protein K8.1 (228 aa).

Positions 1–26 (MSSTQIRTEIPVALLILCLCLVACHA) are cleaved as a signal peptide. N-linked (GlcNAc...) asparagine; by host glycans are attached at residues asparagine 55, asparagine 60, asparagine 70, and asparagine 85. Residues 77 to 113 (GSPSSEYPNVSVSVEDTSASGSGEDAIDESGSGEEER) are disordered. A compositionally biased stretch (polar residues) spans 78-97 (SPSSEYPNVSVSVEDTSASG). Residues 197 to 217 (LYILWAVGLLLGLVLILYLCV) traverse the membrane as a helical segment.

Its subcellular location is the host membrane. The chain is Protein K8.1 (K8.1) from Human herpesvirus 8 type P (isolate GK18) (HHV-8).